Consider the following 1040-residue polypeptide: Multidrug resistance protein MdtB (1040 aa).

12 helical membrane passes run 16 to 36 (FIMRPVATTLLMVAILLAGII), 347 to 367 (LMMAIALVVMIIYLFLRNIPA), 369 to 389 (IIPGVAVPLSLIGTFAVMVFL), 396 to 416 (LTLMALTIATGFVVDDAIVVI), 440 to 460 (IGFTIISLTFSLIAVLIPLLF), 472 to 492 (FAITLAVAILISAVVSLTLTP), 537 to 557 (WLTLSVALSTLLLSVLLWVFI), 863 to 883 (LGSTVWLIVAAVVAMYIVLGI), 888 to 908 (FIHPITILSTLPTAGVGALLA), 911 to 931 (IAGSELDVIAIIGIILLIGIV), 968 to 988 (ILMTTLAALLGALPLMLSTGV), and 998 to 1018 (IGMVGGLVVSQVLTLFTTPVI).

The protein belongs to the resistance-nodulation-cell division (RND) (TC 2.A.6) family. MdtB subfamily. Part of a tripartite efflux system composed of MdtA, MdtB and MdtC. MdtB forms a heteromultimer with MdtC.

The protein resides in the cell inner membrane. Functionally, the MdtABC tripartite complex confers resistance against novobiocin and deoxycholate. The protein is Multidrug resistance protein MdtB of Escherichia fergusonii (strain ATCC 35469 / DSM 13698 / CCUG 18766 / IAM 14443 / JCM 21226 / LMG 7866 / NBRC 102419 / NCTC 12128 / CDC 0568-73).